Consider the following 280-residue polypeptide: 4-diphosphocytidyl-2-C-methyl-D-erythritol kinase (280 aa).

Lys-8 is a catalytic residue. 91 to 101 (PIEAGLAGGSS) contributes to the ATP binding site. Asp-133 is a catalytic residue.

It belongs to the GHMP kinase family. IspE subfamily.

The catalysed reaction is 4-CDP-2-C-methyl-D-erythritol + ATP = 4-CDP-2-C-methyl-D-erythritol 2-phosphate + ADP + H(+). It functions in the pathway isoprenoid biosynthesis; isopentenyl diphosphate biosynthesis via DXP pathway; isopentenyl diphosphate from 1-deoxy-D-xylulose 5-phosphate: step 3/6. Functionally, catalyzes the phosphorylation of the position 2 hydroxy group of 4-diphosphocytidyl-2C-methyl-D-erythritol. The protein is 4-diphosphocytidyl-2-C-methyl-D-erythritol kinase of Clostridium tetani (strain Massachusetts / E88).